The primary structure comprises 162 residues: uncharacterized protein (162 aa).

This is an uncharacterized protein from Salmonella typhi.